We begin with the raw amino-acid sequence, 737 residues long: Dipeptidyl peptidase 3 (737 aa).

The residue at position 2 (Ala2) is an N-acetylalanine. His450 is a binding site for Zn(2+). The active site involves Glu451. Zn(2+) is bound by residues His455 and Glu508.

This sequence belongs to the peptidase M49 family. The cofactor is Zn(2+). Detected in placenta (at protein level). Detected in erythrocytes (at protein level).

It localises to the cytoplasm. The protein localises to the cytosol. The catalysed reaction is Release of an N-terminal dipeptide from a peptide comprising four or more residues, with broad specificity. Also acts on dipeptidyl 2-naphthylamides.. Its activity is regulated as follows. Activated by Co(2+). Inhibited by EDTA and o-phenanthroline (in vitro). Functionally, cleaves and degrades bioactive peptides, including angiotensin, Leu-enkephalin and Met-enkephalin. Also cleaves Arg-Arg-beta-naphthylamide (in vitro). This is Dipeptidyl peptidase 3 (DPP3) from Homo sapiens (Human).